The primary structure comprises 396 residues: NADH-ubiquinone oxidoreductase 49 kDa subunit (396 aa).

The protein belongs to the complex I 49 kDa subunit family.

The protein resides in the mitochondrion. It carries out the reaction a ubiquinone + NADH + 5 H(+)(in) = a ubiquinol + NAD(+) + 4 H(+)(out). Core subunit of the mitochondrial membrane respiratory chain NADH dehydrogenase (Complex I) that is believed to belong to the minimal assembly required for catalysis. Complex I functions in the transfer of electrons from NADH to the respiratory chain. The immediate electron acceptor for the enzyme is believed to be ubiquinone. Component of the iron-sulfur (IP) fragment of the enzyme. Component of the iron-sulfur (IP) fragment of the enzyme. In Reclinomonas americana, this protein is NADH-ubiquinone oxidoreductase 49 kDa subunit (NAD7).